A 467-amino-acid polypeptide reads, in one-letter code: Putative alpha-amylase (467 aa).

Glutamate 145 serves as the catalytic Nucleophile.

The protein belongs to the glycosyl hydrolase 57 family.

The enzyme catalyses Endohydrolysis of (1-&gt;4)-alpha-D-glucosidic linkages in polysaccharides containing three or more (1-&gt;4)-alpha-linked D-glucose units.. The polypeptide is Putative alpha-amylase (Methanocaldococcus jannaschii (strain ATCC 43067 / DSM 2661 / JAL-1 / JCM 10045 / NBRC 100440) (Methanococcus jannaschii)).